Here is a 186-residue protein sequence, read N- to C-terminus: ATP synthase subunit delta (186 aa).

This sequence belongs to the ATPase delta chain family. As to quaternary structure, F-type ATPases have 2 components, F(1) - the catalytic core - and F(0) - the membrane proton channel. F(1) has five subunits: alpha(3), beta(3), gamma(1), delta(1), epsilon(1). F(0) has three main subunits: a(1), b(2) and c(10-14). The alpha and beta chains form an alternating ring which encloses part of the gamma chain. F(1) is attached to F(0) by a central stalk formed by the gamma and epsilon chains, while a peripheral stalk is formed by the delta and b chains.

It is found in the cell inner membrane. Its function is as follows. F(1)F(0) ATP synthase produces ATP from ADP in the presence of a proton or sodium gradient. F-type ATPases consist of two structural domains, F(1) containing the extramembraneous catalytic core and F(0) containing the membrane proton channel, linked together by a central stalk and a peripheral stalk. During catalysis, ATP synthesis in the catalytic domain of F(1) is coupled via a rotary mechanism of the central stalk subunits to proton translocation. Functionally, this protein is part of the stalk that links CF(0) to CF(1). It either transmits conformational changes from CF(0) to CF(1) or is implicated in proton conduction. The protein is ATP synthase subunit delta of Brucella melitensis biotype 2 (strain ATCC 23457).